The primary structure comprises 296 residues: Thioredoxin-related transmembrane protein 2 (296 aa).

Residues 1 to 48 (MAVLAPLIALVYSVPRLSRWLAQPYYLLSALLSAAFLLVRKLPPLCHG) form the signal peptide. Residues 49–102 (LPTQREDGNPCDFDWREVEILMFLSAIVMMKNRRSITVEQHIGNIFMFSKVANA) are Extracellular-facing. A helical transmembrane segment spans residues 103–125 (ILFFRLDIRMGLLYITLCIVFLM). Residues 114 to 270 (LLYITLCIVF…YQRAKKPSKA (157 aa)) enclose the Thioredoxin domain. Residues 126–296 (TCEPPLYMGP…VSDGENKKDK (171 aa)) lie on the Cytoplasmic side of the membrane. 3 positions are modified to phosphoserine: Ser211, Ser243, and Ser288. A disordered region spans residues 266–296 (KPSKAGDSIPEEQPVASAPTTVSDGENKKDK). Positions 293-296 (KKDK) match the Di-lysine motif motif.

In terms of assembly, monomer. Homodimer; disulfide-linked. Occurs in both reduced and oxidized monomeric form. Oxidative conditions increase homodimerization. Interacts with CANX. Interacts with ATP2A2.

Its subcellular location is the endoplasmic reticulum membrane. The protein localises to the mitochondrion membrane. Its function is as follows. Endoplasmic reticulum and mitochondria-associated protein that probably functions as a regulator of cellular redox state and thereby regulates protein post-translational modification, protein folding and mitochondrial activity. Indirectly regulates neuronal proliferation, migration, and organization in the developing brain. In Pongo abelii (Sumatran orangutan), this protein is Thioredoxin-related transmembrane protein 2 (TMX2).